A 300-amino-acid polypeptide reads, in one-letter code: Ribosomal protein bS6--L-glutamate ligase (300 aa).

In terms of domain architecture, ATP-grasp spans 104 to 287 (MQLLARQGID…IAGKMIRWIE (184 aa)). ATP-binding positions include Lys-141, 178–179 (EY), Asp-187, and 211–213 (RSN). Residues Asp-248, Glu-260, and Asn-262 each contribute to the Mg(2+) site. Residues Asp-248, Glu-260, and Asn-262 each coordinate Mn(2+).

The protein belongs to the RimK family. Mg(2+) serves as cofactor. The cofactor is Mn(2+).

Its function is as follows. An L-glutamate ligase that catalyzes the ATP-dependent post-translational addition of glutamate residues to the C-terminus of ribosomal protein bS6 (RpsF). Is also able to catalyze the synthesis of poly-alpha-glutamate in vitro, via ATP hydrolysis from unprotected glutamate as substrate. The number of glutamate residues added to either RpsF or to poly-alpha-glutamate changes with pH. This Shigella boydii serotype 18 (strain CDC 3083-94 / BS512) protein is Ribosomal protein bS6--L-glutamate ligase.